Reading from the N-terminus, the 306-residue chain is Recombination-associated protein RdgC (306 aa).

Belongs to the RdgC family.

It is found in the cytoplasm. Its subcellular location is the nucleoid. In terms of biological role, may be involved in recombination. The protein is Recombination-associated protein RdgC of Pseudomonas fluorescens (strain SBW25).